Reading from the N-terminus, the 92-residue chain is Transcription factor PRE5 (92 aa).

The bHLH domain occupies 4-59; that stretch reads RRSRQTSNASRISDDQMIDLVSKLRQFLPEIHERRRSDKVSASKVLQETCNYIRKL.

It belongs to the bHLH protein family. In terms of assembly, interacts with IBH1.

Its subcellular location is the nucleus. In terms of biological role, atypical and probable non DNA-binding bHLH transcription factor that integrates multiple signaling pathways to regulate cell elongation and plant development. May have a regulatory role in various aspects of gibberellin-dependent growth and development. The protein is Transcription factor PRE5 (PRE5) of Arabidopsis thaliana (Mouse-ear cress).